The primary structure comprises 484 residues: tRNA sulfurtransferase (484 aa).

One can recognise a THUMP domain in the interval Gln-63–Arg-167. Residues Leu-185–Ile-186, Lys-267, Gly-289, and Gln-298 each bind ATP. A disulfide bridge links Cys-346 with Cys-458. Residues Ile-406–Pro-484 form the Rhodanese domain. Cys-458 serves as the catalytic Cysteine persulfide intermediate.

It belongs to the ThiI family.

The protein localises to the cytoplasm. The catalysed reaction is [ThiI sulfur-carrier protein]-S-sulfanyl-L-cysteine + a uridine in tRNA + 2 reduced [2Fe-2S]-[ferredoxin] + ATP + H(+) = [ThiI sulfur-carrier protein]-L-cysteine + a 4-thiouridine in tRNA + 2 oxidized [2Fe-2S]-[ferredoxin] + AMP + diphosphate. It carries out the reaction [ThiS sulfur-carrier protein]-C-terminal Gly-Gly-AMP + S-sulfanyl-L-cysteinyl-[cysteine desulfurase] + AH2 = [ThiS sulfur-carrier protein]-C-terminal-Gly-aminoethanethioate + L-cysteinyl-[cysteine desulfurase] + A + AMP + 2 H(+). It participates in cofactor biosynthesis; thiamine diphosphate biosynthesis. Functionally, catalyzes the ATP-dependent transfer of a sulfur to tRNA to produce 4-thiouridine in position 8 of tRNAs, which functions as a near-UV photosensor. Also catalyzes the transfer of sulfur to the sulfur carrier protein ThiS, forming ThiS-thiocarboxylate. This is a step in the synthesis of thiazole, in the thiamine biosynthesis pathway. The sulfur is donated as persulfide by IscS. This Shewanella sp. (strain MR-7) protein is tRNA sulfurtransferase.